Here is a 312-residue protein sequence, read N- to C-terminus: Glyoxylate/hydroxypyruvate reductase A (312 aa).

Arg227 is an active-site residue. His275 functions as the Proton donor in the catalytic mechanism.

Belongs to the D-isomer specific 2-hydroxyacid dehydrogenase family. GhrA subfamily.

The protein localises to the cytoplasm. The catalysed reaction is glycolate + NADP(+) = glyoxylate + NADPH + H(+). The enzyme catalyses (R)-glycerate + NAD(+) = 3-hydroxypyruvate + NADH + H(+). It carries out the reaction (R)-glycerate + NADP(+) = 3-hydroxypyruvate + NADPH + H(+). Catalyzes the NADPH-dependent reduction of glyoxylate and hydroxypyruvate into glycolate and glycerate, respectively. In Shigella boydii serotype 18 (strain CDC 3083-94 / BS512), this protein is Glyoxylate/hydroxypyruvate reductase A.